We begin with the raw amino-acid sequence, 30 residues long: Photosystem I reaction center subunit XII (30 aa).

Residues 6-26 traverse the membrane as a helical segment; it reads VFTILAIALVPAVMALLLGSA.

Belongs to the PsaM family.

It is found in the cellular thylakoid membrane. In Synechococcus sp. (strain JA-2-3B'a(2-13)) (Cyanobacteria bacterium Yellowstone B-Prime), this protein is Photosystem I reaction center subunit XII.